Here is a 145-residue protein sequence, read N- to C-terminus: Large ribosomal subunit protein uL13 (145 aa).

Belongs to the universal ribosomal protein uL13 family. As to quaternary structure, part of the 50S ribosomal subunit.

Functionally, this protein is one of the early assembly proteins of the 50S ribosomal subunit, although it is not seen to bind rRNA by itself. It is important during the early stages of 50S assembly. This is Large ribosomal subunit protein uL13 from Staphylococcus saprophyticus subsp. saprophyticus (strain ATCC 15305 / DSM 20229 / NCIMB 8711 / NCTC 7292 / S-41).